The sequence spans 547 residues: Inositol-tetrakisphosphate 1-kinase 6 (547 aa).

Position 263 (K263) interacts with 1D-myo-inositol 1,3,4-trisphosphate. Residues R317 and K370 each coordinate ATP. The ATP-grasp domain occupies L327–E539. 1D-myo-inositol 1,3,4-trisphosphate-binding residues include H381 and K415. ATP-binding positions include Q404–K415, S430, and S450. Residues D497, D511, and N513 each contribute to the Mg(2+) site. The 1D-myo-inositol 1,3,4-trisphosphate site is built by N513 and S517.

This sequence belongs to the ITPK1 family. As to quaternary structure, monomer. The cofactor is Mg(2+).

The enzyme catalyses 1D-myo-inositol 3,4,5,6-tetrakisphosphate + ATP = 1D-myo-inositol 1,3,4,5,6-pentakisphosphate + ADP + H(+). It carries out the reaction 1D-myo-inositol 1,3,4-trisphosphate + ATP = 1D-myo-inositol 1,3,4,5-tetrakisphosphate + ADP + H(+). The catalysed reaction is 1D-myo-inositol 1,3,4-trisphosphate + ATP = 1D-myo-inositol 1,3,4,6-tetrakisphosphate + ADP + H(+). Functionally, kinase that can phosphorylate various inositol polyphosphate such as Ins(3,4,5,6)P4 or Ins(1,3,4)P3 and participates in phytic acid biosynthesis in developing seeds. Phytic acid is the primary storage form of phosphorus in cereal grains and other plant seeds. The sequence is that of Inositol-tetrakisphosphate 1-kinase 6 from Oryza sativa subsp. indica (Rice).